We begin with the raw amino-acid sequence, 362 residues long: Phosphoserine aminotransferase (362 aa).

Arg43 provides a ligand contact to L-glutamate. Residues 77-78 (AS), Trp103, Thr153, Asp173, and Gln196 contribute to the pyridoxal 5'-phosphate site. Lys197 bears the N6-(pyridoxal phosphate)lysine mark. 238–239 (NT) contacts pyridoxal 5'-phosphate.

The protein belongs to the class-V pyridoxal-phosphate-dependent aminotransferase family. SerC subfamily. In terms of assembly, homodimer. Pyridoxal 5'-phosphate is required as a cofactor.

The protein localises to the cytoplasm. It catalyses the reaction O-phospho-L-serine + 2-oxoglutarate = 3-phosphooxypyruvate + L-glutamate. The enzyme catalyses 4-(phosphooxy)-L-threonine + 2-oxoglutarate = (R)-3-hydroxy-2-oxo-4-phosphooxybutanoate + L-glutamate. Its pathway is amino-acid biosynthesis; L-serine biosynthesis; L-serine from 3-phospho-D-glycerate: step 2/3. Functionally, catalyzes the reversible conversion of 3-phosphohydroxypyruvate to phosphoserine and of 3-hydroxy-2-oxo-4-phosphonooxybutanoate to phosphohydroxythreonine. The sequence is that of Phosphoserine aminotransferase from Lysinibacillus sphaericus (strain C3-41).